The chain runs to 54 residues: Large ribosomal subunit protein bL33A (54 aa).

It belongs to the bacterial ribosomal protein bL33 family.

The protein is Large ribosomal subunit protein bL33A of Mycolicibacterium gilvum (strain PYR-GCK) (Mycobacterium gilvum (strain PYR-GCK)).